The following is a 356-amino-acid chain: D-alanine--D-alanine ligase (356 aa).

The 205-residue stretch at 146-350 (KKLLVAEGLP…YAELLDTLIQ (205 aa)) folds into the ATP-grasp domain. 173 to 228 (KERLGLPVFVKPARGGSSIGVSKVSAWEDLEAALTLAYESDDKVLIEPEISGAEVE) is a binding site for ATP. Mg(2+) is bound by residues Asp305, Glu317, and Asn319.

This sequence belongs to the D-alanine--D-alanine ligase family. The cofactor is Mg(2+). Mn(2+) is required as a cofactor.

It is found in the cytoplasm. The catalysed reaction is 2 D-alanine + ATP = D-alanyl-D-alanine + ADP + phosphate + H(+). The protein operates within cell wall biogenesis; peptidoglycan biosynthesis. Functionally, cell wall formation. In Corynebacterium aurimucosum (strain ATCC 700975 / DSM 44827 / CIP 107346 / CN-1) (Corynebacterium nigricans), this protein is D-alanine--D-alanine ligase.